Consider the following 659-residue polypeptide: Sodium/nucleoside cotransporter 2 (659 aa).

Positions 1 to 10 are enriched in basic and acidic residues; it reads MAKSEGRKSA. Residues 1 to 22 form a disordered region; sequence MAKSEGRKSASQDTSENGMENP. Ser46 carries the phosphoserine modification. 14 consecutive transmembrane segments (helical) span residues 81–101, 105–124, 149–167, 173–193, 201–221, 234–254, 261–281, 296–315, 337–356, 363–382, 424–444, 455–475, 530–550, and 568–588; these read ILLG…CILN, ALAL…CHFL, KRVF…LALD, EQLI…ACSK, RTVF…IRTE, IQIF…DTLV, QSLP…YLGL, TMGT…FVGM, VMTG…FISF, LISA…KLVY, VAAN…TLSW, TFQV…GVQW, ATFS…LGGL, and ALFT…ILYV.

It belongs to the concentrative nucleoside transporter (CNT) (TC 2.A.41) family. Expressed in liver (in bile canalicular membrane vesicles (CMV) but not in sinusoidal vesicles), jejunum, spleen and heart. Also expressed in brain and skeletal muscle. Not expressed in kidney, muscle and lung.

It localises to the membrane. It is found in the apicolateral cell membrane. The enzyme catalyses adenosine(out) + Na(+)(out) = adenosine(in) + Na(+)(in). It carries out the reaction inosine(out) + Na(+)(out) = inosine(in) + Na(+)(in). It catalyses the reaction guanosine(out) + Na(+)(out) = guanosine(in) + Na(+)(in). The catalysed reaction is uridine(out) + Na(+)(out) = uridine(in) + Na(+)(in). Its activity is regulated as follows. Inhibited by formycin B, partially inhibited by purine analog ara-A. Sodium-dependent and purine-selective. Exhibits the transport characteristics of the nucleoside transport system cif or N1 subtype (N1/cif) (selective for purine nucleosides and uridine). Accepts purine, analogs of purine nucleosides and uridine, and exhibits high affinity for adenosine. May contribute to regulate the transport of organic compounds in testes across the blood-testis-barrier. The sequence is that of Sodium/nucleoside cotransporter 2 (Slc28a2) from Rattus norvegicus (Rat).